Consider the following 583-residue polypeptide: Penicillin-binding protein activator LpoA (583 aa).

The first 24 residues, 1–24, serve as a signal peptide directing secretion; sequence MATILKQKLKTFFVPTAITLLLSA. Residue cysteine 25 is the site of N-palmitoyl cysteine attachment. A lipid anchor (S-diacylglycerol cysteine) is attached at cysteine 25.

Belongs to the LpoA family. Interacts with PBP1a.

Its subcellular location is the cell outer membrane. Functionally, regulator of peptidoglycan synthesis that is essential for the function of penicillin-binding protein 1A (PBP1a). This Haemophilus ducreyi (strain 35000HP / ATCC 700724) protein is Penicillin-binding protein activator LpoA.